Reading from the N-terminus, the 162-residue chain is uncharacterized protein (162 aa).

3 helical membrane passes run 7–27 (LIADYGYLAIFLMLVLGIVGL), 51–71 (LSILISFVGALLGMLISYMIG), and 134–154 (TYVAFAAIGAFLWCFVFITIG).

It belongs to the DedA family.

It localises to the cell membrane. This is an uncharacterized protein from Bacillus subtilis (strain 168).